A 378-amino-acid chain; its full sequence is Phospho-N-acetylmuramoyl-pentapeptide-transferase (378 aa).

10 helical membrane-spanning segments follow: residues 27 to 47, 74 to 94, 96 to 116, 135 to 155, 184 to 204, 216 to 236, 256 to 276, 280 to 300, 305 to 325, and 355 to 375; these read TAFASLTALFLCIALGPWLIN, TMGGVLIVISIVIPTLLWADL, YPYVWIALAGLLGYGWIGFLD, LVYQFIMGFAFAASLLVMRAY, WTYVIGVAPFCIFVALVVVFY, GLAIGLMVIAAGALTVLAYAG, LTIFCGSMTGASLGFLWYNAH, IFMGDVGSLGLGGAMAVVAVL, ILLLFIGGIFVLEAFSVILQV, and KIIARFWIAGLVLALFALTTL.

The protein belongs to the glycosyltransferase 4 family. MraY subfamily. Requires Mg(2+) as cofactor.

The protein localises to the cell inner membrane. It catalyses the reaction UDP-N-acetyl-alpha-D-muramoyl-L-alanyl-gamma-D-glutamyl-meso-2,6-diaminopimeloyl-D-alanyl-D-alanine + di-trans,octa-cis-undecaprenyl phosphate = di-trans,octa-cis-undecaprenyl diphospho-N-acetyl-alpha-D-muramoyl-L-alanyl-D-glutamyl-meso-2,6-diaminopimeloyl-D-alanyl-D-alanine + UMP. Its pathway is cell wall biogenesis; peptidoglycan biosynthesis. In terms of biological role, catalyzes the initial step of the lipid cycle reactions in the biosynthesis of the cell wall peptidoglycan: transfers peptidoglycan precursor phospho-MurNAc-pentapeptide from UDP-MurNAc-pentapeptide onto the lipid carrier undecaprenyl phosphate, yielding undecaprenyl-pyrophosphoryl-MurNAc-pentapeptide, known as lipid I. The protein is Phospho-N-acetylmuramoyl-pentapeptide-transferase of Solibacter usitatus (strain Ellin6076).